We begin with the raw amino-acid sequence, 278 residues long: uncharacterized protein (278 aa).

The 55-residue stretch at 1–55 folds into the Response regulatory domain; the sequence is MKIRERFSMVDLPVLIITAAIIGHDKYKAFHAGANDILQKPYHYSEFMARIQNLI.

This is an uncharacterized protein from Bacillus subtilis (strain 168).